The following is a 147-amino-acid chain: 3-hydroxyacyl-[acyl-carrier-protein] dehydratase FabZ (147 aa).

Histidine 49 is an active-site residue.

Belongs to the thioester dehydratase family. FabZ subfamily.

Its subcellular location is the cytoplasm. It catalyses the reaction a (3R)-hydroxyacyl-[ACP] = a (2E)-enoyl-[ACP] + H2O. In terms of biological role, involved in unsaturated fatty acids biosynthesis. Catalyzes the dehydration of short chain beta-hydroxyacyl-ACPs and long chain saturated and unsaturated beta-hydroxyacyl-ACPs. The sequence is that of 3-hydroxyacyl-[acyl-carrier-protein] dehydratase FabZ from Alkaliphilus metalliredigens (strain QYMF).